The following is a 1166-amino-acid chain: MKQRWLLVLILCFFTTSLVMGIHGKHLINDDFNETALLLAFKQNSVKSDPNNVLGNWKYESGRGSCSWRGVSCSDDGRIVGLDLRNSGLTGTLNLVNLTALPNLQNLYLQGNYFSSGGDSSGSDCYLQVLDLSSNSISDYSMVDYVFSKCSNLVSVNISNNKLVGKLGFAPSSLQSLTTVDLSYNILSDKIPESFISDFPASLKYLDLTHNNLSGDFSDLSFGICGNLTFFSLSQNNLSGDKFPITLPNCKFLETLNISRNNLAGKIPNGEYWGSFQNLKQLSLAHNRLSGEIPPELSLLCKTLVILDLSGNTFSGELPSQFTACVWLQNLNLGNNYLSGDFLNTVVSKITGITYLYVAYNNISGSVPISLTNCSNLRVLDLSSNGFTGNVPSGFCSLQSSPVLEKILIANNYLSGTVPMELGKCKSLKTIDLSFNELTGPIPKEIWMLPNLSDLVMWANNLTGTIPEGVCVKGGNLETLILNNNLLTGSIPESISRCTNMIWISLSSNRLTGKIPSGIGNLSKLAILQLGNNSLSGNVPRQLGNCKSLIWLDLNSNNLTGDLPGELASQAGLVMPGSVSGKQFAFVRNEGGTDCRGAGGLVEFEGIRAERLERLPMVHSCPATRIYSGMTMYTFSANGSMIYFDISYNAVSGFIPPGYGNMGYLQVLNLGHNRITGTIPDSFGGLKAIGVLDLSHNNLQGYLPGSLGSLSFLSDLDVSNNNLTGPIPFGGQLTTFPVSRYANNSGLCGVPLRPCGSAPRRPITSRIHAKKQTVATAVIAGIAFSFMCFVMLVMALYRVRKVQKKEQKREKYIESLPTSGSCSWKLSSVPEPLSINVATFEKPLRKLTFAHLLEATNGFSAETMVGSGGFGEVYKAQLRDGSVVAIKKLIRITGQGDREFMAEMETIGKIKHRNLVPLLGYCKVGEERLLVYEYMKWGSLETVLHEKSSKKGGIYLNWAARKKIAIGAARGLAFLHHSCIPHIIHRDMKSSNVLLDEDFEARVSDFGMARLVSALDTHLSVSTLAGTPGYVPPEYYQSFRCTAKGDVYSYGVILLELLSGKKPIDPGEFGEDNNLVGWAKQLYREKRGAEILDPELVTDKSGDVELFHYLKIASQCLDDRPFKRPTMIQLMAMFKEMKADTEEDESLDEFSLKETPLVEESRDKEP.

Positions 1 to 21 are cleaved as a signal peptide; sequence MKQRWLLVLILCFFTTSLVMG. Residues 22-776 lie on the Extracellular side of the membrane; that stretch reads IHGKHLINDD…IHAKKQTVAT (755 aa). N-linked (GlcNAc...) asparagine glycosylation occurs at Asn33. A Cys pair 1 motif is present at residues 66–73; that stretch reads CSWRGVSC. 20 LRR repeats span residues 78 to 99, 103 to 124, 126 to 147, 152 to 173, 176 to 197, 202 to 224, 227 to 248, 252 to 274, 278 to 300, 303 to 325, 327 to 349, 352 to 375, 376 to 397, 403 to 424, 427 to 449, 451 to 473, 476 to 498, 500 to 522, 524 to 547, and 548 to 570; these read RIVG…VNLT, NLQN…SGSD, YLQV…DYVF, NLVS…APSS, SLTT…SFIS, SLKY…SFGI, NLTF…ITLP, FLET…EYWG, NLKQ…LSLL, TLVI…FTAC, WLQN…VVSK, GITY…TNCS, NLRV…GFCS, VLEK…ELGK, SLKT…IWML, NLSD…VCVK, NLET…ISRC, NMIW…IGNL, KLAI…GNCK, and SLIW…LASQ. Residue Asn97 is glycosylated (N-linked (GlcNAc...) asparagine). An N-linked (GlcNAc...) asparagine glycan is attached at Asn157. 4 N-linked (GlcNAc...) asparagine glycosylation sites follow: Asn212, Asn227, Asn237, and Asn257. N-linked (GlcNAc...) asparagine glycosylation is found at Asn362 and Asn373. 2 N-linked (GlcNAc...) asparagine glycosylation sites follow: Asn451 and Asn461. N-linked (GlcNAc...) asparagine glycans are attached at residues Asn521, Asn532, Asn558, and Asn638. 3 LRR repeats span residues 664-686, 688-710, and 712-734; these read YLQV…FGGL, AIGV…LGSL, and FLSD…GQLT. 2 N-linked (GlcNAc...) asparagine glycosylation sites follow: Asn722 and Asn743. The Cys pair 2 signature appears at 748–755; sequence CGVPLRPC. A helical membrane pass occupies residues 777-797; sequence AVIAGIAFSFMCFVMLVMALY. Over 798 to 1166 the chain is Cytoplasmic; sequence RVRKVQKKEQ…LVEESRDKEP (369 aa). A phosphothreonine mark is found at Thr848 and Thr856. Residues 859–1147 enclose the Protein kinase domain; the sequence is FSAETMVGSG…KADTEEDESL (289 aa). ATP contacts are provided by residues 865 to 873 and Lys887; that span reads VGSGGFGEV. Tyr932 carries the phosphotyrosine modification. Asp987 (proton acceptor) is an active-site residue. Residue Ser1022 is modified to Phosphoserine. Residue Tyr1030 is modified to Phosphotyrosine. Thr1141 bears the Phosphothreonine mark. The interval 1142-1166 is disordered; it reads EEDESLDEFSLKETPLVEESRDKEP.

Belongs to the protein kinase superfamily. Ser/Thr protein kinase family. As to expression, predominantly expressed in vascular tissues. From 7 day old seedlings, it is expressed in the columella cells of the root tip, in the vascular initials in the meristematic region of the root and in vascular tissues. After germination, it is expressed in the stele cell and in the early differentiation zone of the root, where the expression continues from the root to the hypocotyls and cotyledons following the midvein. In mature plants, it is expressed in the vasculature of the leaf, predominantly in the midvein, and in the vascular bundles of inflorescence stems. Localizes to procambial cells of the vascular bundles located between the differentiating xylem and the phloem.

The protein resides in the cell membrane. It carries out the reaction L-seryl-[protein] + ATP = O-phospho-L-seryl-[protein] + ADP + H(+). It catalyses the reaction L-threonyl-[protein] + ATP = O-phospho-L-threonyl-[protein] + ADP + H(+). Its function is as follows. Receptor with a serine/threonine-protein kinase activity. Regulates, in response to brassinosteroid binding, a signaling cascade involved in plant development. Binds brassinolide. May be involved in cell growth and vascular differentiation. The protein is Serine/threonine-protein kinase BRI1-like 1 (BRL1) of Arabidopsis thaliana (Mouse-ear cress).